Reading from the N-terminus, the 264-residue chain is Hemin import ATP-binding protein HmuV (264 aa).

Residues 2 to 241 (IEVSGLSVRL…ATMLSVFGCA (240 aa)) form the ABC transporter domain. 34 to 41 (GPNGSGKT) serves as a coordination point for ATP.

The protein belongs to the ABC transporter superfamily. Heme (hemin) importer (TC 3.A.1.14.5) family. The complex is composed of two ATP-binding proteins (HmuV), two transmembrane proteins (HmuU) and a solute-binding protein (HmuT).

The protein localises to the cell inner membrane. Its function is as follows. Part of the ABC transporter complex HmuTUV involved in hemin import. Responsible for energy coupling to the transport system. This is Hemin import ATP-binding protein HmuV from Rhizobium etli (strain ATCC 51251 / DSM 11541 / JCM 21823 / NBRC 15573 / CFN 42).